The primary structure comprises 476 residues: WD repeat, SAM and U-box domain-containing protein 1 (476 aa).

7 WD repeats span residues 10-47 (DHSD…ELPY), 52-91 (GHTY…MLAV), 95-134 (PTGS…FYRS), 137-176 (VKDG…LCNE), 178-227 (AHDL…FLGG), 237-276 (GHSA…ILHT), and 279-318 (QHTR…PCAG). In terms of domain architecture, SAM spans 333–396 (WSEDDVSAWL…LQKIEELRMK (64 aa)). Residues 403-476 (AVPDEFLCPI…ISRWLETQQK (74 aa)) enclose the U-box domain.

This chain is WD repeat, SAM and U-box domain-containing protein 1 (WDSUB1), found in Gallus gallus (Chicken).